Here is a 628-residue protein sequence, read N- to C-terminus: Zinc finger protein 555 (628 aa).

A KRAB domain is found at 4–77 (VVFEDVAVDF…ESKIATFTRN (74 aa)). The C2H2-type 1; degenerate zinc finger occupies 172–194 (YQCQECGQAYSCRSHLRMHVRTH). 14 consecutive C2H2-type zinc fingers follow at residues 200 to 222 (YVCKLCGKTFPRTSSLNRHVRIH), 228 to 250 (YECKQCGKAFIDFSSLTSHLRSH), 256 to 278 (YKCKECGKAFSYSSTFRRHTITH), 284 to 306 (YKCKECAEAFSYSSTFRRHMISH), 312 to 334 (HKCKECGEAFSYSSAFRRHMITH), 340 to 362 (YECKQCGKTFIYLQSFRRHERIH), 368 to 390 (YECKQCGKTFIYPQSFRRHERTH), 396 to 418 (YECNQCGKAFSHPSSFRGHMRVH), 424 to 446 (YECKQCGKTFNWPISLRKHMRTH), 452 to 474 (YECKQCGKAFSLSACFREHVRMH), 480 to 502 (YECKLCGKAFYCHISLQKHMRRH), 508 to 530 (YKCKQCGKAFSWPELLQQHVRTH), 536 to 558 (YECKECGKVFKWPSSLPIHMRLH), and 564 to 586 (YQCKHCGKAFNCSSSLRRHVRIH).

This sequence belongs to the krueppel C2H2-type zinc-finger protein family.

It localises to the nucleus. Its function is as follows. May be involved in transcriptional regulation. This is Zinc finger protein 555 (ZNF555) from Homo sapiens (Human).